Consider the following 241-residue polypeptide: Caffeoyl-CoA O-methyltransferase (241 aa).

Position 14 (lysine 14) interacts with substrate. S-adenosyl-L-methionine is bound by residues threonine 58, glutamate 80, 82–83, serine 88, aspartate 106, and alanine 135; that span reads GV. Aspartate 158 serves as a coordination point for substrate. Aspartate 158 provides a ligand contact to a divalent metal cation. Aspartate 160 is an S-adenosyl-L-methionine binding site. Positions 184 and 185 each coordinate a divalent metal cation.

This sequence belongs to the class I-like SAM-binding methyltransferase superfamily. Cation-dependent O-methyltransferase family. CCoAMT subfamily. A divalent metal cation is required as a cofactor.

The enzyme catalyses (E)-caffeoyl-CoA + S-adenosyl-L-methionine = (E)-feruloyl-CoA + S-adenosyl-L-homocysteine + H(+). Its pathway is aromatic compound metabolism; phenylpropanoid biosynthesis. Its function is as follows. Methylates caffeoyl-CoA to feruloyl-CoA and 5-hydroxyferuloyl-CoA to sinapoyl-CoA. Plays a role in the synthesis of feruloylated polysaccharides. Involved in the reinforcement of the plant cell wall. Also involved in the responding to wounding or pathogen challenge by the increased formation of cell wall-bound ferulic acid polymers. This chain is Caffeoyl-CoA O-methyltransferase, found in Stellaria longipes (Longstalk starwort).